A 239-amino-acid polypeptide reads, in one-letter code: Fatty acid metabolism regulator protein (239 aa).

The HTH gntR-type domain occupies 6-74; it reads QSPAGFAEEY…HGKPTKVNNF (69 aa). A DNA-binding region (H-T-H motif) is located at residues 34–53; the sequence is ERELSELIGVTRTTLREVLQ.

Homodimer.

Its subcellular location is the cytoplasm. Its function is as follows. Multifunctional regulator of fatty acid metabolism. The polypeptide is Fatty acid metabolism regulator protein (Yersinia pseudotuberculosis serotype O:1b (strain IP 31758)).